Reading from the N-terminus, the 280-residue chain is uncharacterized protein (280 aa).

Disordered regions lie at residues 1–124 (MPRD…QREA) and 177–280 (LEEE…LSSK). Basic residues-rich tracts occupy residues 16-36 (SRRR…RSRR) and 48-83 (YSRR…RQKS). Composition is skewed to basic and acidic residues over residues 102–124 (AKNR…QREA) and 182–259 (EASL…ERLK).

This is an uncharacterized protein from Arabidopsis thaliana (Mouse-ear cress).